A 176-amino-acid chain; its full sequence is RNA pyrophosphohydrolase (176 aa).

In terms of domain architecture, Nudix hydrolase spans 6 to 149 (GYRPNVGIVI…KRDVYRRVMK (144 aa)). The short motif at 38-59 (GGINPGESAEQAMYRELFEEVG) is the Nudix box element.

Belongs to the Nudix hydrolase family. RppH subfamily. It depends on a divalent metal cation as a cofactor.

Its function is as follows. Accelerates the degradation of transcripts by removing pyrophosphate from the 5'-end of triphosphorylated RNA, leading to a more labile monophosphorylated state that can stimulate subsequent ribonuclease cleavage. The polypeptide is RNA pyrophosphohydrolase (Shigella boydii serotype 4 (strain Sb227)).